The following is a 209-amino-acid chain: Large ribosomal subunit protein bL9 (209 aa).

The segment at 169 to 209 (RDGASFTEDYDPNAEPGLATEAEEAVADADDNAETNSEESL) is disordered. Acidic residues predominate over residues 189–209 (EAEEAVADADDNAETNSEESL).

Belongs to the bacterial ribosomal protein bL9 family.

Functionally, binds to the 23S rRNA. This Zymomonas mobilis subsp. mobilis (strain ATCC 31821 / ZM4 / CP4) protein is Large ribosomal subunit protein bL9.